A 620-amino-acid chain; its full sequence is 1-deoxy-D-xylulose-5-phosphate synthase (620 aa).

Residues H80 and 121–123 (GHS) each bind thiamine diphosphate. Residue D152 coordinates Mg(2+). Residues 153 to 154 (GA), N181, Y288, and E370 each bind thiamine diphosphate. N181 is a binding site for Mg(2+).

This sequence belongs to the transketolase family. DXPS subfamily. As to quaternary structure, homodimer. Requires Mg(2+) as cofactor. Thiamine diphosphate serves as cofactor.

The catalysed reaction is D-glyceraldehyde 3-phosphate + pyruvate + H(+) = 1-deoxy-D-xylulose 5-phosphate + CO2. It participates in metabolic intermediate biosynthesis; 1-deoxy-D-xylulose 5-phosphate biosynthesis; 1-deoxy-D-xylulose 5-phosphate from D-glyceraldehyde 3-phosphate and pyruvate: step 1/1. Functionally, catalyzes the acyloin condensation reaction between C atoms 2 and 3 of pyruvate and glyceraldehyde 3-phosphate to yield 1-deoxy-D-xylulose-5-phosphate (DXP). The chain is 1-deoxy-D-xylulose-5-phosphate synthase from Shigella flexneri.